Consider the following 587-residue polypeptide: ATP-dependent lipid A-core flippase (587 aa).

The next 5 helical transmembrane spans lie at 31–51 (LIVSGVALVFNALADSGLIYL), 68–88 (LKMMAFVVVGMIILRGITNFI), 145–165 (GSLITIVREGAYIISLFAVMF), 166–186 (YTSWELTIVLFIIGPIIAVLI), and 259–279 (VQVIASLALATVLYLATTPLI). One can recognise an ABC transmembrane type-1 domain in the interval 32 to 315 (IVSGVALVFN…LTAVNAQFQS (284 aa)). The region spanning 347–583 (LEFKNVSFAY…NGAYKQLHSM (237 aa)) is the ABC transporter domain. 381-388 (GRSGSGKS) serves as a coordination point for ATP.

It belongs to the ABC transporter superfamily. Lipid exporter (TC 3.A.1.106) family. As to quaternary structure, homodimer.

Its subcellular location is the cell inner membrane. The catalysed reaction is ATP + H2O + lipid A-core oligosaccharideSide 1 = ADP + phosphate + lipid A-core oligosaccharideSide 2.. In terms of biological role, involved in lipopolysaccharide (LPS) biosynthesis. Translocates lipid A-core from the inner to the outer leaflet of the inner membrane. Transmembrane domains (TMD) form a pore in the inner membrane and the ATP-binding domain (NBD) is responsible for energy generation. This chain is ATP-dependent lipid A-core flippase, found in Haemophilus influenzae (strain ATCC 51907 / DSM 11121 / KW20 / Rd).